A 173-amino-acid chain; its full sequence is FMN reductase (NADH) RutF 2 (173 aa).

Belongs to the non-flavoprotein flavin reductase family. RutF subfamily.

The catalysed reaction is FMNH2 + NAD(+) = FMN + NADH + 2 H(+). Functionally, catalyzes the reduction of FMN to FMNH2 which is used to reduce pyrimidine by RutA via the Rut pathway. This is FMN reductase (NADH) RutF 2 from Rhizobium rhizogenes (strain K84 / ATCC BAA-868) (Agrobacterium radiobacter).